Consider the following 134-residue polypeptide: Profilin-5 (134 aa).

The protein belongs to the profilin family. In terms of assembly, occurs in many kinds of cells as a complex with monomeric actin in a 1:1 ratio. In terms of tissue distribution, specifically expressed in mature pollen grains. Expressed in germinating pollen grains. Expressed in growing pollen tubes (at protein level).

The protein resides in the cytoplasm. Its subcellular location is the cytoskeleton. Functionally, binds to actin monomers and regulates the organization of the actin cytoskeleton. At high concentrations, profilin prevents the polymerization of actin, whereas it enhances it at low concentrations. At low concentrations, associates with the poly-proline motif of formins to enhance actin filament elongation rate. Acts redundantly with PRF4 to regulate apical actin polymerization at the tip of pollen tube and control polarized pollen tube growth. Functions probably by favoring formin-mediated actin polymerization at pollen tube tips. This is Profilin-5 from Arabidopsis thaliana (Mouse-ear cress).